Reading from the N-terminus, the 274-residue chain is MPELPEVETTKTSLFPLLNQKVLSVEVRNPSLRWPIPDNVQKLVGQRLIGLNRRSKYILAEFEQDQMLWHLGMSGSFRLCQPNDELRKHDHLIIQFEDQQLRYHDPRRFGCILWLNPETQGKLIDTLGPEPLSTDFHAEYLASKLKNKSVGIKIALMDNHVVVGVGNIYATESLFNVGIHPAQPAGDLTMQQIEKLVVEIKRILKSAIDLGGSTLRDYSNAMGENGYFQQTLLAYGRAREMCVNCETTLENLKLGQRASVFCPQCQPLKKLRKP.

Catalysis depends on proline 2, which acts as the Schiff-base intermediate with DNA. The active-site Proton donor is the glutamate 3. The active-site Proton donor; for beta-elimination activity is the lysine 56. DNA contacts are provided by histidine 89, arginine 107, and lysine 148. The segment at 233-267 (LAYGRAREMCVNCETTLENLKLGQRASVFCPQCQP) adopts an FPG-type zinc-finger fold. The active-site Proton donor; for delta-elimination activity is arginine 257.

Belongs to the FPG family. In terms of assembly, monomer. The cofactor is Zn(2+).

The catalysed reaction is Hydrolysis of DNA containing ring-opened 7-methylguanine residues, releasing 2,6-diamino-4-hydroxy-5-(N-methyl)formamidopyrimidine.. The enzyme catalyses 2'-deoxyribonucleotide-(2'-deoxyribose 5'-phosphate)-2'-deoxyribonucleotide-DNA = a 3'-end 2'-deoxyribonucleotide-(2,3-dehydro-2,3-deoxyribose 5'-phosphate)-DNA + a 5'-end 5'-phospho-2'-deoxyribonucleoside-DNA + H(+). Functionally, involved in base excision repair of DNA damaged by oxidation or by mutagenic agents. Acts as a DNA glycosylase that recognizes and removes damaged bases. Has a preference for oxidized purines, such as 7,8-dihydro-8-oxoguanine (8-oxoG). Has AP (apurinic/apyrimidinic) lyase activity and introduces nicks in the DNA strand. Cleaves the DNA backbone by beta-delta elimination to generate a single-strand break at the site of the removed base with both 3'- and 5'-phosphates. This is Formamidopyrimidine-DNA glycosylase from Acinetobacter baumannii (strain SDF).